The chain runs to 159 residues: Small ribosomal subunit protein uS9 (159 aa).

The protein belongs to the universal ribosomal protein uS9 family.

The protein is Small ribosomal subunit protein uS9 of Beijerinckia indica subsp. indica (strain ATCC 9039 / DSM 1715 / NCIMB 8712).